The chain runs to 24 residues: MALNLQDKQAIVAEVSEVAKGALS.

The protein belongs to the universal ribosomal protein uL10 family. As to quaternary structure, part of the ribosomal stalk of the 50S ribosomal subunit. The N-terminus interacts with L11 and the large rRNA to form the base of the stalk. The C-terminus forms an elongated spine to which L12 dimers bind in a sequential fashion forming a multimeric L10(L12)X complex.

Forms part of the ribosomal stalk, playing a central role in the interaction of the ribosome with GTP-bound translation factors. This Enterobacter cloacae protein is Large ribosomal subunit protein uL10 (rplJ).